A 334-amino-acid polypeptide reads, in one-letter code: MKTLDEFIVEKQAEYPNAKGALTGILSSIRLVAKIIHRDINRAGLSNDILGYAGNQNVQGENQMKLDVFANDTFKRALMAREEVAGFASEEEDDFVAFDTERGRNARYIILTDPLDGSSNIDVNVAVGTIFSIYRRISPVGTPVTLEDFMQPGHKQVAAGYVVYGSSTMLVYTTGNGVNGFTYDPSLGVFCMSHENLQIPSTGRIYSINEGQYLKFPMGVKKYIKYCQEEDKATNRPYTSRYIGSLVSDFHRNMLKGGIYIYPNATNYPNGKLRLLYEGNPMAFLAEQAGGLANDGYNRILDIEPLELHQRVPFFVGSKEMVKKANEFMRDYPE.

Residues E90, D113, L115, and D116 each coordinate Mg(2+). Substrate contacts are provided by residues 116–119, N209, Y242, and K272; that span reads DGSS. E278 lines the Mg(2+) pocket.

Belongs to the FBPase class 1 family. Homotetramer. The cofactor is Mg(2+).

Its subcellular location is the cytoplasm. It catalyses the reaction beta-D-fructose 1,6-bisphosphate + H2O = beta-D-fructose 6-phosphate + phosphate. It functions in the pathway carbohydrate biosynthesis; gluconeogenesis. The polypeptide is Fructose-1,6-bisphosphatase class 1 (Actinobacillus succinogenes (strain ATCC 55618 / DSM 22257 / CCUG 43843 / 130Z)).